A 161-amino-acid polypeptide reads, in one-letter code: Nucleotide-binding protein Bcep1808_2648 (161 aa).

This sequence belongs to the YajQ family.

Nucleotide-binding protein. This is Nucleotide-binding protein Bcep1808_2648 from Burkholderia vietnamiensis (strain G4 / LMG 22486) (Burkholderia cepacia (strain R1808)).